The chain runs to 1036 residues: Phytosulfokine receptor 2 (1036 aa).

The first 16 residues, Met1–Ser16, serve as a signal peptide directing secretion. N-linked (GlcNAc...) asparagine glycans are attached at residues Asn36 and Asn45. LRR repeat units lie at residues Glu89–Leu111, Gln113–Lys136, Leu137–Pro159, Gly160–Ser182, Gly185–Ser207, Ser209–Ile231, Glu233–Ser256, Gly257–Leu279, Gln281–Cys303, Lys305–Gly326, Asp329–Cys351, Lys353–Leu375, Ser377–Leu398, Asn403–Thr423, Asn427–Lys450, Lys451–Met473, and Ser475–Lys498. Residues Asn142, Asn165, and Asn205 are each glycosylated (N-linked (GlcNAc...) asparagine). Residues Asn251, Asn254, and Asn278 are each glycosylated (N-linked (GlcNAc...) asparagine). Asn313 and Asn323 each carry an N-linked (GlcNAc...) asparagine glycan. N-linked (GlcNAc...) asparagine glycans are attached at residues Asn385, Asn403, and Asn421. N-linked (GlcNAc...) asparagine glycans are attached at residues Asn483, Asn504, Asn523, Asn549, and Asn571. LRR repeat units follow at residues Glu561–Leu583 and Asn585–Ser606. A helical membrane pass occupies residues Ile680–Leu700. Phosphothreonine is present on Thr751. Residues Phe754–Leu1025 form the Protein kinase domain. ATP contacts are provided by residues Ile760–Val768 and Lys782. Phosphotyrosine occurs at positions 827 and 867. Asp880 serves as the catalytic Proton acceptor. Tyr922 carries the phosphotyrosine modification. The stretch at Arg995–Glu1020 is one LRR 20 repeat.

This sequence belongs to the protein kinase superfamily. Ser/Thr protein kinase family.

It localises to the cell membrane. It carries out the reaction L-seryl-[protein] + ATP = O-phospho-L-seryl-[protein] + ADP + H(+). The enzyme catalyses L-threonyl-[protein] + ATP = O-phospho-L-threonyl-[protein] + ADP + H(+). In terms of biological role, phytosulfokine receptor with a serine/threonine-protein kinase activity. This is Phytosulfokine receptor 2 (PSKR2) from Arabidopsis thaliana (Mouse-ear cress).